A 758-amino-acid polypeptide reads, in one-letter code: Vitamin K-dependent gamma-carboxylase (758 aa).

The disordered stretch occupies residues 1 to 34 (MAVSARPARAPRGPDKVKKDKAAQTSGPRQGSQM). Alanine 2 is modified (N-acetylalanine). Over 2-60 (AVSARPARAPRGPDKVKKDKAAQTSGPRQGSQMGKLLGFEWTDVSSWERLVTLLNRPTD) the chain is Cytoplasmic. Residues 12-22 (RGPDKVKKDKA) are compositionally biased toward basic and acidic residues. Over residues 23–33 (AQTSGPRQGSQ) the composition is skewed to polar residues. A helical membrane pass occupies residues 61-81 (PASLAVFRFLFGLMMVLDIPQ). Over 82–113 (ERGLSSLDRRYLDGLEVCRFPLLDALQPLPLD) the chain is Lumenal. The cysteines at positions 99 and 450 are disulfide-linked. A helical transmembrane segment spans residues 114-134 (WMYLVYTIMFLGALGMMLGLC). At 135–136 (YR) the chain is on the cytoplasmic side. A helical transmembrane segment spans residues 137 to 157 (ISCVLFLLPYWYVFLLDKTSW). Residues 158-292 (NNHSYLYGLL…VSYFHCMNSQ (135 aa)) lie on the Lumenal side of the membrane. A helical transmembrane segment spans residues 293–313 (LFSIGMFPYVMLASSPLFCSP). Residues 314 to 361 (EWPRKLVAHCPKKLQELLPLRTAPQPSTSCMYKRSRARGSQKPGLRHQ) lie on the Cytoplasmic side of the membrane. The helical transmembrane segment at 362–382 (LSTAFTLLYLLEQLFLPYSHF) threads the bilayer. Residues 383–758 (LTQGYNNWTN…PDSHPVHSEF (376 aa)) are Lumenal-facing. Positions 726 to 758 (RPFEPAGEPSPVNTDSSNPNPPEPDSHPVHSEF) are disordered. Over residues 749-758 (PDSHPVHSEF) the composition is skewed to basic and acidic residues.

This sequence belongs to the vitamin K-dependent gamma-carboxylase family. In terms of assembly, monomer. May interact with CALU.

The protein localises to the endoplasmic reticulum membrane. It catalyses the reaction 4-carboxy-L-glutamyl-[protein] + 2,3-epoxyphylloquinone + H2O + H(+) = phylloquinol + L-glutamyl-[protein] + CO2 + O2. Functionally, mediates the vitamin K-dependent carboxylation of glutamate residues to calcium-binding gamma-carboxyglutamate (Gla) residues with the concomitant conversion of the reduced hydroquinone form of vitamin K to vitamin K epoxide. Catalyzes gamma-carboxylation of various proteins, such as blood coagulation factors (F2, F7, F9 and F10), osteocalcin (BGLAP) or matrix Gla protein (MGP). The chain is Vitamin K-dependent gamma-carboxylase (GGCX) from Ovis aries (Sheep).